Consider the following 578-residue polypeptide: Proline--tRNA ligase (578 aa).

The protein belongs to the class-II aminoacyl-tRNA synthetase family. ProS type 1 subfamily. Homodimer.

It is found in the cytoplasm. It catalyses the reaction tRNA(Pro) + L-proline + ATP = L-prolyl-tRNA(Pro) + AMP + diphosphate. Its function is as follows. Catalyzes the attachment of proline to tRNA(Pro) in a two-step reaction: proline is first activated by ATP to form Pro-AMP and then transferred to the acceptor end of tRNA(Pro). As ProRS can inadvertently accommodate and process non-cognate amino acids such as alanine and cysteine, to avoid such errors it has two additional distinct editing activities against alanine. One activity is designated as 'pretransfer' editing and involves the tRNA(Pro)-independent hydrolysis of activated Ala-AMP. The other activity is designated 'posttransfer' editing and involves deacylation of mischarged Ala-tRNA(Pro). The misacylated Cys-tRNA(Pro) is not edited by ProRS. The chain is Proline--tRNA ligase from Brachyspira hyodysenteriae (strain ATCC 49526 / WA1).